Reading from the N-terminus, the 151-residue chain is D-aminoacyl-tRNA deacylase (151 aa).

A Gly-cisPro motif, important for rejection of L-amino acids motif is present at residues glycine 138–proline 139.

It belongs to the DTD family. As to quaternary structure, homodimer.

The protein localises to the cytoplasm. The catalysed reaction is glycyl-tRNA(Ala) + H2O = tRNA(Ala) + glycine + H(+). It catalyses the reaction a D-aminoacyl-tRNA + H2O = a tRNA + a D-alpha-amino acid + H(+). An aminoacyl-tRNA editing enzyme that deacylates mischarged D-aminoacyl-tRNAs. Also deacylates mischarged glycyl-tRNA(Ala), protecting cells against glycine mischarging by AlaRS. Acts via tRNA-based rather than protein-based catalysis; rejects L-amino acids rather than detecting D-amino acids in the active site. By recycling D-aminoacyl-tRNA to D-amino acids and free tRNA molecules, this enzyme counteracts the toxicity associated with the formation of D-aminoacyl-tRNA entities in vivo and helps enforce protein L-homochirality. In Picosynechococcus sp. (strain ATCC 27264 / PCC 7002 / PR-6) (Agmenellum quadruplicatum), this protein is D-aminoacyl-tRNA deacylase.